Reading from the N-terminus, the 378-residue chain is Erythronate-4-phosphate dehydrogenase (378 aa).

Substrate contacts are provided by serine 45 and threonine 66. Residues aspartate 146 and threonine 175 each contribute to the NAD(+) site. Arginine 208 is an active-site residue. Aspartate 232 contacts NAD(+). Residue glutamate 237 is part of the active site. Residue histidine 254 is the Proton donor of the active site. Residue glycine 257 coordinates NAD(+). Tyrosine 258 is a substrate binding site.

This sequence belongs to the D-isomer specific 2-hydroxyacid dehydrogenase family. PdxB subfamily. In terms of assembly, homodimer.

Its subcellular location is the cytoplasm. The catalysed reaction is 4-phospho-D-erythronate + NAD(+) = (R)-3-hydroxy-2-oxo-4-phosphooxybutanoate + NADH + H(+). It functions in the pathway cofactor biosynthesis; pyridoxine 5'-phosphate biosynthesis; pyridoxine 5'-phosphate from D-erythrose 4-phosphate: step 2/5. Functionally, catalyzes the oxidation of erythronate-4-phosphate to 3-hydroxy-2-oxo-4-phosphonooxybutanoate. The sequence is that of Erythronate-4-phosphate dehydrogenase from Pectobacterium carotovorum subsp. carotovorum (strain PC1).